Reading from the N-terminus, the 344-residue chain is Tripartite motif-containing protein 44 (344 aa).

Disordered stretches follow at residues 1-25 (MASGVGAAFEELPHDGTCDECEPDE) and 68-165 (TPPA…EFDP). Over residues 75–92 (GAGKEEAEVKVEQEREIE) the composition is skewed to basic and acidic residues. The span at 93–165 (SEAGEESESE…ETEAESEFDP (73 aa)) shows a compositional bias: acidic residues. The B box-type zinc-finger motif lies at 174 to 215 (VAKRKCPDHGLDLSTYCQEDRQLICVLCPVIGAHQGHQLSTL). Zn(2+) is bound by residues cysteine 179, histidine 182, cysteine 201, and histidine 207. Positions 290 to 325 (AHVTEILADIQSHMDRLMTQMAQAKEQLDTSNESAE) form a coiled coil. The interval 309 to 344 (QMAQAKEQLDTSNESAEPKAEGDEEGPSGASEEEDT) is disordered. Acidic residues predominate over residues 330–344 (GDEEGPSGASEEEDT). Residues serine 336 and serine 339 each carry the phosphoserine modification.

Interacts (via coiled coil) with TRIM17 (via coiled coil).

Functionally, may play a role in the process of differentiation and maturation of neuronal cells. May regulate the activity of TRIM17. Is a negative regulator of PAX6 expression. The protein is Tripartite motif-containing protein 44 (TRIM44) of Pongo abelii (Sumatran orangutan).